The primary structure comprises 119 residues: C-C motif chemokine 24 (119 aa).

The first 26 residues, 1-26 (MAGSATIVAGLLLLVACACCIFPIDS), serve as a signal peptide directing secretion. 2 disulfide bridges follow: Cys33–Cys58 and Cys34–Cys74. N-linked (GlcNAc...) asparagine glycosylation is found at Asn54 and Asn115. Positions 96 to 119 (PSKGAKAVRTKFAVQRRRGNSTEV) are disordered. The segment covering 101–119 (KAVRTKFAVQRRRGNSTEV) has biased composition (basic residues).

The protein belongs to the intercrine beta (chemokine CC) family. Highest expression in jejunum and spleen. Lower levels found in liver and lung. No expression detected in kidney, thymus, brain or testis.

The protein localises to the secreted. Chemotactic for resting T-lymphocytes, and eosinophils. Has lower chemotactic activity for neutrophils but none for monocytes and activated lymphocytes. Is a strong suppressor of colony formation by a multipotential hematopoietic progenitor cell line. Binds to CCR3. This Mus musculus (Mouse) protein is C-C motif chemokine 24.